We begin with the raw amino-acid sequence, 291 residues long: Probable prolyl 4-hydroxylase 12 (291 aa).

Topologically, residues 1–156 (MACLSRIFLI…GEEPSSVLHE (156 aa)) are cytoplasmic. The 115-residue stretch at 125 to 239 (NGGSIKVRSY…LLVATKLIYA (115 aa)) folds into the Fe2OG dioxygenase domain. Lysine 142 and aspartate 144 together coordinate Fe cation. The chain crosses the membrane as a helical; Signal-anchor for type II membrane protein span at residues 157-173 (SLLATVVLYLSNTTQGG). Residues 174–291 (ELLFPNSEMK…GTCRKSCNAC (118 aa)) are Lumenal-facing. The N-linked (GlcNAc...) asparagine glycan is linked to asparagine 211. Residue histidine 220 participates in Fe cation binding. The region spanning 251–291 (CSDEDENCGRWAKLGECKKNPVYMIGSPDYYGTCRKSCNAC) is the ShKT domain. 3 disulfides stabilise this stretch: cysteine 251–cysteine 291, cysteine 258–cysteine 284, and cysteine 267–cysteine 288.

The protein belongs to the P4HA family. Fe(2+) serves as cofactor. Requires L-ascorbate as cofactor.

It localises to the endoplasmic reticulum membrane. The catalysed reaction is L-prolyl-[collagen] + 2-oxoglutarate + O2 = trans-4-hydroxy-L-prolyl-[collagen] + succinate + CO2. Functionally, catalyzes the post-translational formation of 4-hydroxyproline in -Xaa-Pro-Gly- sequences in proline-rich peptide sequences of plant glycoproteins and other proteins. Hydroxyprolines are important constituent of many plant cell wall glycoproteins such as extensins, hydroxyproline-rich glycoproteins, lectins and arabinogalactan proteins. The chain is Probable prolyl 4-hydroxylase 12 from Arabidopsis thaliana (Mouse-ear cress).